Consider the following 464-residue polypeptide: Secretion-regulating guanine nucleotide exchange factor (464 aa).

RCC1 repeat units lie at residues 14–66, 68–118, 119–170, 172–229, 230–282, 283–349, and 350–401; these read AAAL…VVTD, GSLF…ILTE, NGQV…AATA, GTVF…SLTD, AGEL…AQTV, TGKV…LAVI, and GGVC…ALCQ. Basic and acidic residues predominate over residues 301–313; it reads VETREGWESEKQD. The interval 301–323 is disordered; it reads VETREGWESEKQDPSLPGSGPQK. The segment at 411-464 is disordered; that stretch reads HPSVTSPSPDATKEARSQEAMEQERNQKERHAETSPQAQSDRFRNGGLVAETLE. Positions 421–443 are enriched in basic and acidic residues; the sequence is ATKEARSQEAMEQERNQKERHAE. The residue at position 427 (S427) is a Phosphoserine.

Interacts with SEC5. The interaction occurs only in the presence of magnesium or manganese and is stimulated by dCTP or GTP.

Its subcellular location is the cytoplasm. It localises to the nucleus. Probable guanine nucleotide exchange factor (GEF), which may be involved in the secretion process. The protein is Secretion-regulating guanine nucleotide exchange factor (SERGEF) of Bos taurus (Bovine).